We begin with the raw amino-acid sequence, 361 residues long: MSSSDYYSQRVGDTVFTVQKRYTNLTNIGSGAQGVVCSAFDTVTQEKIAIKKLVKPFQNETYAKRAFRELRLMKMVDHKNIIGLKNLFTPAKSLDDFQDVYIVMELMDANLCRVIGIELDHDRMSYLLYQLLCGIKHLHSAGIIHRDLKPSNIVVKEDCSLKILDFGLARTADQTFNMTPYVVTRYYRAPEVIVGMKYKENVDIWSVGCIFAEMIRGDILLPGKDYIDQWNKVTQVLGTPPSVFFKQLSSSVRLYCESQPRYAGKSWKDLFPDDVFPNDTPEDKAKTRHGRDLLSKMLQIDPQNRITVEQALAHPYVSIWYDPAEVHAPPPKRYDHALDEQSIPLDQWKTRIYEEVKTYNS.

The Protein kinase domain maps to 22-317 (YTNLTNIGSG…VEQALAHPYV (296 aa)). Residues 29–34 (GSGAQG) and lysine 51 each bind ATP. The active-site Proton acceptor is the aspartate 147. At threonine 179 the chain carries Phosphothreonine. The short motif at 179–181 (TPY) is the TXY element. Tyrosine 181 is modified (phosphotyrosine).

This sequence belongs to the protein kinase superfamily. CMGC Ser/Thr protein kinase family. MAP kinase subfamily. Mg(2+) is required as a cofactor. Dually phosphorylated on Thr-179 and Tyr-181, which activates the enzyme.

It catalyses the reaction L-seryl-[protein] + ATP = O-phospho-L-seryl-[protein] + ADP + H(+). The enzyme catalyses L-threonyl-[protein] + ATP = O-phospho-L-threonyl-[protein] + ADP + H(+). With respect to regulation, activated by threonine and tyrosine phosphorylation. Functionally, responds to activation by environmental stress and pro-inflammatory cytokines by phosphorylating a number of transcription factors, and thus regulates transcriptional activity. The sequence is that of Stress-activated protein kinase JNK (JNK) from Suberites domuncula (Sponge).